Consider the following 377-residue polypeptide: Nitric oxide reductase FlRd-NAD(+) reductase (377 aa).

It belongs to the FAD-dependent oxidoreductase family. FAD serves as cofactor.

The protein resides in the cytoplasm. It carries out the reaction 2 reduced [nitric oxide reductase rubredoxin domain] + NAD(+) + H(+) = 2 oxidized [nitric oxide reductase rubredoxin domain] + NADH. It functions in the pathway nitrogen metabolism; nitric oxide reduction. Functionally, one of at least two accessory proteins for anaerobic nitric oxide (NO) reductase. Reduces the rubredoxin moiety of NO reductase. The chain is Nitric oxide reductase FlRd-NAD(+) reductase from Escherichia coli O6:H1 (strain CFT073 / ATCC 700928 / UPEC).